The primary structure comprises 128 residues: Large ribosomal subunit protein bL12 (128 aa).

The protein belongs to the bacterial ribosomal protein bL12 family. In terms of assembly, homodimer. Part of the ribosomal stalk of the 50S ribosomal subunit. Forms a multimeric L10(L12)X complex, where L10 forms an elongated spine to which 2 to 4 L12 dimers bind in a sequential fashion. Binds GTP-bound translation factors.

Functionally, forms part of the ribosomal stalk which helps the ribosome interact with GTP-bound translation factors. Is thus essential for accurate translation. The chain is Large ribosomal subunit protein bL12 from Rubrobacter xylanophilus (strain DSM 9941 / JCM 11954 / NBRC 16129 / PRD-1).